The following is a 159-amino-acid chain: Neuroglobin (159 aa).

A Globin domain is found at 3 to 151; the sequence is KLSEKDKGLI…VVSAMTRGWA (149 aa). The heme b site is built by His-66 and His-98.

This sequence belongs to the globin family. As to quaternary structure, monomer. Homodimers and homotetramers. Mainly monomeric but also detected as part of homodimers and homotetramers. Detected in brain, eye and gill, but not in muscle and blood (at protein level). Particularly high expression in the periventral zone of tectum opticum, with significant expression detected in white matter, preglomerular nucleus, posterior tubular nucleus, torus longitudinalis, hypothalamus, pituitary gland, posterior tuberculum, hypothalamus, synencephalon and formatio reticularis. Detected also in brain regions of the visual system, predominantly in parts of tectum opticum and torus semicircularis, area dorsalis telencephali and medulla oblongata. Strong expression observed in sensory epithelium of peripheral olfactory organ, and outer and inner nuclear layers and ganglion cell layer of retina.

Its subcellular location is the cytoplasm. It is found in the cytosol. It localises to the mitochondrion matrix. It carries out the reaction Fe(III)-heme b-[protein] + nitric oxide + H2O = Fe(II)-heme b-[protein] + nitrite + 2 H(+). In terms of biological role, monomeric globin with a bis-histidyl six-coordinate heme-iron atom through which it can bind dioxygen, carbon monoxide and nitric oxide. Could help transport oxygen and increase its availability to the metabolically active neuronal tissues, though its low quantity in tissues as well as its high affinity for dioxygen, which may limit its oxygen-releasing ability, argue against it. The ferrous/deoxygenated form exhibits a nitrite reductase activity and it could produce nitric oxide which in turn inhibits cellular respiration in response to hypoxia. In its ferrous/deoxygenated state, it may also exhibit GDI (Guanine nucleotide Dissociation Inhibitor) activity toward heterotrimeric G-alpha proteins, thereby regulating signal transduction to facilitate neuroprotective responses in the wake of hypoxia and associated oxidative stress. The sequence is that of Neuroglobin (ngb) from Danio rerio (Zebrafish).